The primary structure comprises 234 residues: Large ribosomal subunit protein uL1 (234 aa).

This sequence belongs to the universal ribosomal protein uL1 family. As to quaternary structure, part of the 50S ribosomal subunit.

Binds directly to 23S rRNA. The L1 stalk is quite mobile in the ribosome, and is involved in E site tRNA release. Functionally, protein L1 is also a translational repressor protein, it controls the translation of the L11 operon by binding to its mRNA. This Aliivibrio salmonicida (strain LFI1238) (Vibrio salmonicida (strain LFI1238)) protein is Large ribosomal subunit protein uL1.